The chain runs to 241 residues: MTTATQSSAPGVNVDQAEVEKFSALAARWWDPESEFKPLHAINPLRLGWIQETAGSLSGKRVLDVGCGGGILSESMAVAGAQVTGIDLAEKSLKIARLHGLESGVKVDYRAVPVEELATEQPGQYDVVTCMEMLEHVPDPASVVRACAALAKPGGWVFFSTLNRNPKSFLFAIVGAEYVLRLLPRGTHSYDSFIKPSELAASARQAGLEPTGMRGMEYNPITQVYSLSANTSVNYLMSTRK.

The S-adenosyl-L-methionine site is built by Arg46, Gly66, Asp87, and Met131.

It belongs to the methyltransferase superfamily. UbiG/COQ3 family.

The enzyme catalyses a 3-demethylubiquinol + S-adenosyl-L-methionine = a ubiquinol + S-adenosyl-L-homocysteine + H(+). It catalyses the reaction a 3-(all-trans-polyprenyl)benzene-1,2-diol + S-adenosyl-L-methionine = a 2-methoxy-6-(all-trans-polyprenyl)phenol + S-adenosyl-L-homocysteine + H(+). It participates in cofactor biosynthesis; ubiquinone biosynthesis. Functionally, O-methyltransferase that catalyzes the 2 O-methylation steps in the ubiquinone biosynthetic pathway. The sequence is that of Ubiquinone biosynthesis O-methyltransferase from Bordetella bronchiseptica (strain ATCC BAA-588 / NCTC 13252 / RB50) (Alcaligenes bronchisepticus).